We begin with the raw amino-acid sequence, 1525 residues long: Receptor-type guanylate cyclase Gyc76C (1525 aa).

An N-terminal signal peptide occupies residues 1 to 19; sequence MTRWPFNLLLLLSVAVRDC. At 20–493 the chain is on the extracellular side; that stretch reads SNHRTVLTVG…KKDDTHYTST (474 aa). 9 N-linked (GlcNAc...) asparagine glycosylation sites follow: Asn74, Asn184, Asn222, Asn338, Asn383, Asn394, Asn416, Asn428, and Asn458. A helical transmembrane segment spans residues 494–514; the sequence is VAAVVLGVLLFCSGVITMSIY. At 515 to 1525 the chain is on the cytoplasmic side; that stretch reads RKWKIELEIE…AAARDRESIV (1011 aa). The Protein kinase domain maps to 547 to 824; sequence PSKVSLMSAQ…SVIRNRLKKM (278 aa). ATP-binding positions include 553 to 561 and Lys581; that span reads MSAQSYGSR. Residues 896–1026 enclose the Guanylate cyclase domain; that stretch reads TIYFSDIVGF…DTVNTASRME (131 aa). Residues Asp901, Ile902, and Asp945 each coordinate Mg(2+). Disordered regions lie at residues 1122–1168, 1192–1217, and 1256–1308; these read GSRR…NGLG, ETNE…LVRQ, and ESRS…VHSS. Positions 1147–1162 are enriched in basic and acidic residues; sequence ESPRMVSKRDRDRERP. Over residues 1202–1212 the composition is skewed to gly residues; sequence GGSGGVSGSGS. Residues 1282–1308 are compositionally biased toward polar residues; it reads LSKNNSRSLDTGVSLISGNPNGEVHSS.

Belongs to the adenylyl cyclase class-4/guanylyl cyclase family. As to quaternary structure, interacts with the semaphorin 1A receptor PlexA; PlexA enhances Gyc76C catalytic activity. Interacts with the PDZ domain-containing protein kermit; kermit increases cell surface expression of Gyc76C. As to expression, in the adult, widely distributed in the head and thorax with highest levels in the optic lobe and central brain and expression also detected in the retina. Expressed at similar levels in adult head and body. In females, highly expressed in oocytes with lower levels in the digestive tract. In mid-embryogenesis, enriched in the circular visceral mesoderm that overlies the migrating salivary gland and in the fat body that underlies the gland but at background levels in the gland itself. In late embryogenesis, detected in the mature salivary gland, in the somatic body wall muscles and the tendon cells to which the muscles attach, and in the constricting midgut. Also expressed in migrating tracheal cells at mid-embryogenesis and in the developed trachea at the end of embryogenesis with enrichment in the apical domains.

It localises to the cell membrane. It catalyses the reaction GTP = 3',5'-cyclic GMP + diphosphate. In terms of biological role, guanylate cyclase involved in the production of the second messenger cGMP. Acts as a receptor for the NPLP1-4 peptide and modulates the innate immune IMD pathway in response to salt stress by inducing nuclear translocation of NF-kappa-B protein Rel which leads to increased expression of the antimicrobial peptide diptericin. Plays a role in Sema-1a-mediated axon repulsion which is required for the correct establishment of neuromuscular connectivity. Required in developing embryonic somatic muscle for correct patterning of ventral and lateral muscles and for localization of integrin beta-ps at developing dorsal muscle myotendinous junctions. Required for invagination, migration and lumen shape of the embryonic salivary gland by regulating the localization of the integrin-binding protein rhea/Talin to the visceral mesoderm surrounding the gland and maintaining the laminin matrix. Required in the developing wing to regulate extracellular matrix (ECM) organization by activating the cGMP-dependent protein kinase For which represses the activity of matrix metalloproteases such as Mmp2 and decreases ECM matrix reorganization. The protein is Receptor-type guanylate cyclase Gyc76C of Drosophila melanogaster (Fruit fly).